The primary structure comprises 128 residues: Otoraplin (128 aa).

An N-terminal signal peptide occupies residues 1-17 (MARILLLFLPGLVAVCA). 2 cysteine pairs are disulfide-bonded: C32/C37 and C55/C127. In terms of domain architecture, SH3 spans 39-110 (YTISLASAQE…PRNLVKEQRV (72 aa)).

The protein belongs to the MIA/OTOR family. As to expression, highly expressed in cochlea.

Its subcellular location is the secreted. This chain is Otoraplin (OTOR), found in Homo sapiens (Human).